A 314-amino-acid polypeptide reads, in one-letter code: 3'-5' exoribonuclease YhaM (314 aa).

Positions 14–90 (VDLYLLIKSS…QLKLRNIRPA (77 aa)) form a DNA-binding region, OB. The 117-residue stretch at 163–279 (HVVSMLNLAK…LHYIDNLDAK (117 aa)) folds into the HD domain.

This sequence belongs to the YhaM family.

Shows a 3'-5' exoribonuclease activity. This chain is 3'-5' exoribonuclease YhaM, found in Bacillus licheniformis (strain ATCC 14580 / DSM 13 / JCM 2505 / CCUG 7422 / NBRC 12200 / NCIMB 9375 / NCTC 10341 / NRRL NRS-1264 / Gibson 46).